A 153-amino-acid polypeptide reads, in one-letter code: Aminoglycoside N(6')-acetyltransferase type 1 (153 aa).

Residues 6–153 (PTIRQATPAD…YFRMPLEPSA (148 aa)) form the N-acetyltransferase domain. The substrate site is built by W27, Y70, E83, D119, and E140.

Homodimer.

The enzyme catalyses kanamycin B + acetyl-CoA = N(6')-acetylkanamycin B + CoA + H(+). Catalyzes the transfer of an acetyl group from acetyl-CoA to the 6'-amino group of aminoglycoside molecules conferring resistance to antibiotics containing the purpurosamine ring including amikacin, gentamicin, kanamycin B, tobramycin, netilmicin, and isepamicin. This is Aminoglycoside N(6')-acetyltransferase type 1 from Stenotrophomonas maltophilia (Pseudomonas maltophilia).